The sequence spans 274 residues: Pyrroline-5-carboxylate reductase 3 (274 aa).

N-acetylalanine is present on A2.

This sequence belongs to the pyrroline-5-carboxylate reductase family. Homodecamer; composed of 5 homodimers.

Its subcellular location is the cytoplasm. It carries out the reaction L-proline + NADP(+) = (S)-1-pyrroline-5-carboxylate + NADPH + 2 H(+). The enzyme catalyses L-proline + NAD(+) = (S)-1-pyrroline-5-carboxylate + NADH + 2 H(+). It functions in the pathway amino-acid biosynthesis; L-proline biosynthesis; L-proline from L-glutamate 5-semialdehyde: step 1/1. Functionally, oxidoreductase that catalyzes the last step in proline biosynthesis, which corresponds to the reduction of pyrroline-5-carboxylate (P5C) to L-proline using NAD(P)H. Proline is synthesized from either glutamate or ornithine; both are converted to P5C, and then to proline via pyrroline-5-carboxylate reductases (PYCRs). PYCR3 is exclusively linked to the biosynthesis of proline from ornithine. The polypeptide is Pyrroline-5-carboxylate reductase 3 (Rattus norvegicus (Rat)).